Reading from the N-terminus, the 152-residue chain is Protein-export protein SecB (152 aa).

The protein belongs to the SecB family. In terms of assembly, homotetramer, a dimer of dimers. One homotetramer interacts with 1 SecA dimer.

It is found in the cytoplasm. Functionally, one of the proteins required for the normal export of preproteins out of the cell cytoplasm. It is a molecular chaperone that binds to a subset of precursor proteins, maintaining them in a translocation-competent state. It also specifically binds to its receptor SecA. This Verminephrobacter eiseniae (strain EF01-2) protein is Protein-export protein SecB.